The following is a 553-amino-acid chain: Transcription factor MYB65 (553 aa).

Residues 1 to 44 (MSYTTATADSDDGMHSSIHNESPAPDSISNGCRSRGKRSVLKKG) form a disordered region. 2 HTH myb-type domains span residues 38–90 (RSVL…ANHL) and 91–145 (RPNL…KRRQ). 2 DNA-binding regions (H-T-H motif) span residues 66–90 (WNAV…ANHL) and 118–141 (WAQM…NTRI).

In terms of tissue distribution, mostly expressed in roots (e.g. root tips), stems, pollen, shoot apices, flowers and floral shoot tips, and, to a lower extent, in leaves and siliques.

It localises to the nucleus. Its function is as follows. Transcriptional activator of alpha-amylase expression that binds to 5'-CAACTGTC-3' motif in target gene promoter. In vegetative tissues, inhibits growth by reducing cell proliferation. Promotes the expression of aleurone-related genes (e.g. CP1, CP, GASA1, BXL1 and BXL2) in seeds. Together with MYB33 and MYB101, promotes the programmed cell death (PCD) the vacuolation of protein storage vacuoles (PSVs) in the aleurone layers during seed germination. Together with MYB33, facilitates anther and tapetum development. The chain is Transcription factor MYB65 from Arabidopsis thaliana (Mouse-ear cress).